The sequence spans 249 residues: Small ribosomal subunit protein eS6 (249 aa).

A Glycyl lysine isopeptide (Lys-Gly) (interchain with G-Cter in SUMO2) cross-link involves residue K14. At E35 the chain carries ADP-ribosyl glutamic acid. R137 carries the post-translational modification (3R)-3-hydroxyarginine. Phosphoserine is present on S148. K211 is subject to N6-acetyllysine. The span at 217–229 (MKEAKEKRQEQIA) shows a compositional bias: basic and acidic residues. The interval 217 to 249 (MKEAKEKRQEQIAKRRRLSSLRASTSKSESSQK) is disordered. Phosphoserine is present on residues S235, S236, S240, S242, S244, and S247. Positions 236–249 (SLRASTSKSESSQK) are enriched in low complexity.

Belongs to the eukaryotic ribosomal protein eS6 family. Component of the small ribosomal subunit. Part of the small subunit (SSU) processome, composed of more than 70 proteins and the RNA chaperone small nucleolar RNA (snoRNA) U3. Ribosomal protein S6 is the major substrate of protein kinases in eukaryote ribosomes. The phosphorylation is stimulated by growth factors, tumor promoting agents, and mitogens. It is dephosphorylated at growth arrest. Phosphorylated at Ser-235 and Ser-236 by RPS6KA1 and RPS6KA3; phosphorylation at these sites facilitates the assembly of the pre-initiation complex. In terms of processing, specifically hydroxylated (with R stereochemistry) at C-3 of Arg-137 by KDM8. Post-translationally, mono-ADP-ribosylation at Glu-35 by PARP16 inhibits polysome assembly and mRNA loading, thereby inhibiting protein translation.

It is found in the cytoplasm. Its subcellular location is the nucleus. The protein localises to the nucleolus. Its function is as follows. Component of the 40S small ribosomal subunit. Plays an important role in controlling cell growth and proliferation through the selective translation of particular classes of mRNA. Part of the small subunit (SSU) processome, first precursor of the small eukaryotic ribosomal subunit. During the assembly of the SSU processome in the nucleolus, many ribosome biogenesis factors, an RNA chaperone and ribosomal proteins associate with the nascent pre-rRNA and work in concert to generate RNA folding, modifications, rearrangements and cleavage as well as targeted degradation of pre-ribosomal RNA by the RNA exosome. The sequence is that of Small ribosomal subunit protein eS6 (RPS6) from Oryctolagus cuniculus (Rabbit).